A 126-amino-acid polypeptide reads, in one-letter code: Holo-[acyl-carrier-protein] synthase (126 aa).

Mg(2+) contacts are provided by D8 and E50.

This sequence belongs to the P-Pant transferase superfamily. AcpS family. Requires Mg(2+) as cofactor.

It is found in the cytoplasm. It carries out the reaction apo-[ACP] + CoA = holo-[ACP] + adenosine 3',5'-bisphosphate + H(+). In terms of biological role, transfers the 4'-phosphopantetheine moiety from coenzyme A to a Ser of acyl-carrier-protein. The polypeptide is Holo-[acyl-carrier-protein] synthase (Micrococcus luteus (strain ATCC 4698 / DSM 20030 / JCM 1464 / CCM 169 / CCUG 5858 / IAM 1056 / NBRC 3333 / NCIMB 9278 / NCTC 2665 / VKM Ac-2230) (Micrococcus lysodeikticus)).